Consider the following 99-residue polypeptide: Cystatin (99 aa).

The region spanning 3 to 99 is the Cystatin domain; sequence GGLSPRSVSD…EEKLCGFQVW (97 aa). The short motif at 47 to 51 is the Secondary area of contact element; the sequence is QSVAG. Residues cysteine 65 and cysteine 81 are joined by a disulfide bond.

It belongs to the cystatin family. In terms of tissue distribution, expressed by the venom gland.

It localises to the secreted. Inhibits various C1 cysteine proteases including cathepsin L (Ki is 0.1 nM), papain (Ki is 0.19 nM), cathepsin S (Ki is 1.2 nM), and cathepsin B (Ki is 2.5 nM). This protein has no toxic activity and its function in the venom is unknown. It may play a role as housekeeping or regulatory protein. The chain is Cystatin from Naja atra (Chinese cobra).